A 102-amino-acid chain; its full sequence is Small ribosomal subunit protein uS10 (102 aa).

The protein belongs to the universal ribosomal protein uS10 family. In terms of assembly, part of the 30S ribosomal subunit.

Involved in the binding of tRNA to the ribosomes. The sequence is that of Small ribosomal subunit protein uS10 from Moorella thermoacetica (strain ATCC 39073 / JCM 9320).